Reading from the N-terminus, the 297-residue chain is Heme A synthase (297 aa).

Topologically, residues 1–6 (MNRKLS) are cytoplasmic. A helical membrane pass occupies residues 7 to 27 (IFSAFVTFTMMIVLLMGGTVT). The Extracellular portion of the chain corresponds to 28–62 (KTDSGNGCGTDWPLCHGELIPTNPSVETMIEYSHR). A disulfide bridge connects residues C35 and C42. E58 is an active-site residue. H61 contacts heme o. Residues 63-83 (AVTGVVGLLIIALCLWTLVAF) traverse the membrane as a helical segment. The Cytoplasmic portion of the chain corresponds to 84 to 90 (KDRLDIK). A helical membrane pass occupies residues 91 to 111 (IFAFLAFIFMLIQSIVGAGAV). At 112-121 (VWQQSDLVMA) the chain is on the extracellular side. Residues 122-142 (LHFGISLISFASLLILTILIM) traverse the membrane as a helical segment. H123 lines the heme o pocket. The Cytoplasmic segment spans residues 143 to 160 (ERSGQEFRESVPAFLRKL). Residues 161-181 (LYGLLIYTLIVVYTGAFVRHV) form a helical membrane-spanning segment. Topologically, residues 182–201 (GATYACVGWPVCSQPTMTFE) are extracellular. C187 and C193 are oxidised to a cystine. The chain crosses the membrane as a helical span at residues 202 to 222 (AWVQMIHRILAGLLFFYTLFV). Heme b is bound at residue H208. At 223–236 (HYTAIRLKHRTSRT) the chain is on the cytoplasmic side. The helical transmembrane segment at 237-257 (GMLFATFFISCQVATGAWIVL) threads the bilayer. Topologically, residues 258–262 (GGHAT) are extracellular. Residues 263 to 283 (YVPLLHAFLITCYFGVISYLA) form a helical membrane-spanning segment. H268 serves as a coordination point for heme b. The Cytoplasmic portion of the chain corresponds to 284–297 (YHAFRTRKKDSRLR).

The protein belongs to the COX15/CtaA family. Type 1 subfamily. In terms of assembly, interacts with CtaB. It depends on heme b as a cofactor.

The protein localises to the cell membrane. It carries out the reaction Fe(II)-heme o + 2 A + H2O = Fe(II)-heme a + 2 AH2. The protein operates within porphyrin-containing compound metabolism; heme A biosynthesis; heme A from heme O: step 1/1. Functionally, catalyzes the conversion of heme O to heme A by two successive hydroxylations of the methyl group at C8. The first hydroxylation forms heme I, the second hydroxylation results in an unstable dihydroxymethyl group, which spontaneously dehydrates, resulting in the formyl group of heme A. The chain is Heme A synthase from Exiguobacterium sibiricum (strain DSM 17290 / CCUG 55495 / CIP 109462 / JCM 13490 / 255-15).